An 885-amino-acid chain; its full sequence is Lon protease homolog 2, peroxisomal (885 aa).

Positions 12 to 256 constitute a Lon N-terminal domain; sequence LAVLPFRNKV…KATELVDRHL (245 aa). Residues 70–104 form a disordered region; that stretch reads LLSPGVGSDSGEGGSKVGGSAVESSKQDTKNGKEP. Residues 77-86 show a composition bias toward gly residues; the sequence is SDSGEGGSKV. Residues 94–104 are compositionally biased toward basic and acidic residues; it reads SKQDTKNGKEP. 409-416 is a binding site for ATP; sequence GPPGVGKT. In terms of domain architecture, Lon proteolytic spans 690 to 875; that stretch reads VASPGVSVGL…EEVLDHAFEG (186 aa). Active-site residues include Ser-781 and Lys-824. The Microbody targeting signal signature appears at 883 to 885; that stretch reads SKL.

It belongs to the peptidase S16 family.

It is found in the peroxisome matrix. The enzyme catalyses Hydrolysis of proteins in presence of ATP.. ATP-dependent serine protease that mediates the selective degradation of misfolded and unassembled polypeptides in the peroxisomal matrix. Necessary for type 2 peroxisome targeting signal (PTS2)-containing protein processing and facilitates peroxisome matrix protein import. This Zea mays (Maize) protein is Lon protease homolog 2, peroxisomal (LON1).